We begin with the raw amino-acid sequence, 575 residues long: Phosphoenolpyruvate-protein phosphotransferase (575 aa).

His-189 functions as the Tele-phosphohistidine intermediate in the catalytic mechanism. Phosphoenolpyruvate is bound by residues Arg-296 and Arg-332. Residues Glu-431 and Asp-455 each coordinate Mg(2+). Residues 454–455 and Arg-465 each bind phosphoenolpyruvate; that span reads ND. Cys-502 serves as the catalytic Proton donor.

The protein belongs to the PEP-utilizing enzyme family. As to quaternary structure, homodimer. Mg(2+) is required as a cofactor.

It localises to the cytoplasm. It carries out the reaction L-histidyl-[protein] + phosphoenolpyruvate = N(pros)-phospho-L-histidyl-[protein] + pyruvate. General (non sugar-specific) component of the phosphoenolpyruvate-dependent sugar phosphotransferase system (sugar PTS). This major carbohydrate active-transport system catalyzes the phosphorylation of incoming sugar substrates concomitantly with their translocation across the cell membrane. Enzyme I transfers the phosphoryl group from phosphoenolpyruvate (PEP) to the phosphoryl carrier protein (HPr). The chain is Phosphoenolpyruvate-protein phosphotransferase (ptsI) from Salmonella typhimurium (strain LT2 / SGSC1412 / ATCC 700720).